Here is a 233-residue protein sequence, read N- to C-terminus: Orotidine 5'-phosphate decarboxylase (233 aa).

Substrate contacts are provided by residues Asp-11, Lys-34, 61-70 (DLKLHDIPNT), Thr-117, Arg-179, Gln-189, Gly-209, and Arg-210. The active-site Proton donor is the Lys-63.

Belongs to the OMP decarboxylase family. Type 1 subfamily. Homodimer.

It carries out the reaction orotidine 5'-phosphate + H(+) = UMP + CO2. Its pathway is pyrimidine metabolism; UMP biosynthesis via de novo pathway; UMP from orotate: step 2/2. In terms of biological role, catalyzes the decarboxylation of orotidine 5'-monophosphate (OMP) to uridine 5'-monophosphate (UMP). The chain is Orotidine 5'-phosphate decarboxylase from Streptococcus agalactiae serotype V (strain ATCC BAA-611 / 2603 V/R).